The following is a 448-amino-acid chain: Trigger factor (448 aa).

A PPIase FKBP-type domain is found at 172–257 (GDRVTVDFVG…MKKIEWPHLP (86 aa)).

Belongs to the FKBP-type PPIase family. Tig subfamily.

The protein localises to the cytoplasm. The catalysed reaction is [protein]-peptidylproline (omega=180) = [protein]-peptidylproline (omega=0). In terms of biological role, involved in protein export. Acts as a chaperone by maintaining the newly synthesized protein in an open conformation. Functions as a peptidyl-prolyl cis-trans isomerase. The polypeptide is Trigger factor (Burkholderia lata (strain ATCC 17760 / DSM 23089 / LMG 22485 / NCIMB 9086 / R18194 / 383)).